Reading from the N-terminus, the 224-residue chain is MTVAVVRFGGSNCDRDAVRALAHLGVDAAVAWHDDGLPADTDGVVVPGGFSYGDYLRAGAMAAQSPVVAEVRALAADGVPVLGVCNGAQIGCEAGLAPGAFTTNASARFQCERVHLRVENATTPWTAAYSEGDVLEIPIAHGEGRFEIDDDAYADLVADDRVLFRYCNADGEVTEAANPNGSTGAVAGVTGDRDHVAVMMPHPERATLPALGATDGQGILGAFA.

The Glutamine amidotransferase type-1 domain maps to 2-224; the sequence is TVAVVRFGGS…DGQGILGAFA (223 aa). The Nucleophile role is filled by Cys85. Active-site residues include His202 and Glu204.

Part of the FGAM synthase complex composed of 1 PurL, 1 PurQ and 2 PurS subunits.

It is found in the cytoplasm. The catalysed reaction is N(2)-formyl-N(1)-(5-phospho-beta-D-ribosyl)glycinamide + L-glutamine + ATP + H2O = 2-formamido-N(1)-(5-O-phospho-beta-D-ribosyl)acetamidine + L-glutamate + ADP + phosphate + H(+). It carries out the reaction L-glutamine + H2O = L-glutamate + NH4(+). It functions in the pathway purine metabolism; IMP biosynthesis via de novo pathway; 5-amino-1-(5-phospho-D-ribosyl)imidazole from N(2)-formyl-N(1)-(5-phospho-D-ribosyl)glycinamide: step 1/2. In terms of biological role, part of the phosphoribosylformylglycinamidine synthase complex involved in the purines biosynthetic pathway. Catalyzes the ATP-dependent conversion of formylglycinamide ribonucleotide (FGAR) and glutamine to yield formylglycinamidine ribonucleotide (FGAM) and glutamate. The FGAM synthase complex is composed of three subunits. PurQ produces an ammonia molecule by converting glutamine to glutamate. PurL transfers the ammonia molecule to FGAR to form FGAM in an ATP-dependent manner. PurS interacts with PurQ and PurL and is thought to assist in the transfer of the ammonia molecule from PurQ to PurL. The chain is Phosphoribosylformylglycinamidine synthase subunit PurQ from Halobacterium salinarum (strain ATCC 700922 / JCM 11081 / NRC-1) (Halobacterium halobium).